Here is a 1482-residue protein sequence, read N- to C-terminus: Glutamate receptor ionotropic, NMDA 2B (1482 aa).

The signal sequence occupies residues 1 to 26 (MKPSAECCSPKFWLVLAVLAVSGSKA). At 27–557 (RSQKSPPSIG…SAFLEPFSAD (531 aa)) the chain is on the extracellular side. N74 carries N-linked (GlcNAc...) asparagine glycosylation. A disulfide bond links C86 and C321. Residues H127 and E284 each coordinate Zn(2+). N-linked (GlcNAc...) asparagine glycans are attached at residues N341, N348, N444, and N491. Disulfide bonds link C429/C456 and C436/C457. 2 residues coordinate L-glutamate: T514 and R519. N542 carries N-linked (GlcNAc...) asparagine glycosylation. A helical membrane pass occupies residues 558-576 (VWVMMFVMLLIVSAVAVFV). Residues 577–603 (FEYFSPVGYNRCLADGREPGGPSFTIG) are Cytoplasmic-facing. Residues 604-623 (KAIWLLWGLVFNNSVPVQNP) constitute an intramembrane region (discontinuously helical). The segment at 604-623 (KAIWLLWGLVFNNSVPVQNP) is pore-forming. Residues 624–630 (KGTTSKI) are Cytoplasmic-facing. Residues 631-646 (MVSVWAFFAVIFLASY) form a helical membrane-spanning segment. The Extracellular portion of the chain corresponds to 647–817 (TANLAAFMIQ…VMSSQLDIDN (171 aa)). An N-linked (GlcNAc...) asparagine glycan is attached at N688. L-glutamate contacts are provided by S690, T691, and D732. An intrachain disulfide couples C746 to C801. Residues 818–837 (MAGVFYMLGAAMALSLITFI) form a helical membrane-spanning segment. The Cytoplasmic segment spans residues 838-1482 (CEHLFYWQFR…EKLSSIESDV (645 aa)). 4 positions are modified to phosphoserine: S882, S886, S917, and S920. Y962 and Y1039 each carry phosphotyrosine. 3 positions are modified to phosphoserine: S1058, S1061, and S1064. Y1109 and Y1133 each carry phosphotyrosine. S1143 carries the phosphoserine modification. The residue at position 1155 (Y1155) is a Phosphotyrosine. The disordered stretch occupies residues 1161–1194 (DFKRDSVSGGGPCTNRSHLKHGTGEKHGVVGGVP). Residues S1255 and S1259 each carry the phosphoserine modification. The segment at 1269-1301 (PVAVTSNASSTKYPQSPTNSKAQKKNRNKLRRQ) is disordered. Residues 1272-1289 (VTSNASSTKYPQSPTNSK) are compositionally biased toward polar residues. The span at 1290–1301 (AQKKNRNKLRRQ) shows a compositional bias: basic residues. The tract at residues 1292–1304 (KKNRNKLRRQHSY) is interaction with DAPK1. Position 1303 is a phosphoserine (S1303). The residue at position 1472 (Y1472) is a Phosphotyrosine. A PDZ-binding motif is present at residues 1480–1482 (SDV).

Belongs to the glutamate-gated ion channel (TC 1.A.10.1) family. NR2B/GRIN2B subfamily. Heterotetramer. Forms heterotetrameric channels composed of two GluN1/zeta subunits (GRIN1), and two identical GluN2/epsilon subunits (GRIN2A, GRIN2B, GRIN2C or GRIN2D) or GluN3 subunits (GRIN3A or GRIN3B) (in vitro). Can also form heterotetrameric channels that contain at least two GluN1 subunits and at least two different GluN2 subunits (or a combination of one GluN2 and one GluN3 subunits) (in vitro). In vivo, the subunit composition may depend on the expression levels of the different subunits. Found in a complex with GRIN1, GRIN3A and PPP2CB. Found in a complex with GRIN1 and GRIN3B. Interacts with MAGI3. Interacts with HIP1 and NETO1. Interacts with PDZ domains of PATJ, DLG3 and DLG4. Interacts with DAPK1. Found in a complex with GRIN1 and PRR7. Interacts with PRR7. Interacts with CAMK2A. Interacts with ARC; preventing ARC oligomerization. Interacts with TMEM25. Interacts (via the extreme C-terminus) with FRMPD2 (via the second PDZ domain); the interaction is direct and is likely to promote NMDAR-mediated neural signal transmission. Interacts with FAM81A; the interaction facilitates condensate formation via liquid-liquid phase separation. Phosphorylated on tyrosine residues. Phosphorylation at Ser-1303 by DAPK1 enhances synaptic NMDA receptor channel activity. In terms of tissue distribution, expressed in the hippocampus including the dentate gyrus (at protein level). Detected in adult olfactory bulb, brain cortex, hippocampus, striatum, thalamus, superior colliculus, with much lower levels in inferior colliculus, midbrain and cerebellum.

It localises to the cell membrane. Its subcellular location is the postsynaptic cell membrane. The protein resides in the late endosome. It is found in the lysosome. The protein localises to the cytoplasm. It localises to the cytoskeleton. The catalysed reaction is Ca(2+)(in) = Ca(2+)(out). It carries out the reaction Na(+)(in) = Na(+)(out). The enzyme catalyses K(+)(in) = K(+)(out). With respect to regulation, NMDA glutamate receptor activity is inhibited by micromolar levels of zinc ions. NMDA glutamate receptor activity is inhibited by ifenprodil. Component of N-methyl-D-aspartate (NMDA) receptors (NMDARs) that function as heterotetrameric, ligand-gated cation channels with high calcium permeability and voltage-dependent block by Mg(2+). Participates in synaptic plasticity for learning and memory formation by contributing to the long-term depression (LTD) of hippocampus membrane currents. Channel activation requires binding of the neurotransmitter L-glutamate to the GluN2 subunit, glycine or D-serine binding to the GluN1 subunit, plus membrane depolarization to eliminate channel inhibition by Mg(2+). NMDARs mediate simultaneously the potasium efflux and the influx of calcium and sodium. Each GluN2 subunit confers differential attributes to channel properties, including activation, deactivation and desensitization kinetics, pH sensitivity, Ca2(+) permeability, and binding to allosteric modulators. In concert with DAPK1 at extrasynaptic sites, acts as a central mediator for stroke damage. Its phosphorylation at Ser-1303 by DAPK1 enhances synaptic NMDA receptor channel activity inducing injurious Ca2+ influx through them, resulting in an irreversible neuronal death. This is Glutamate receptor ionotropic, NMDA 2B from Rattus norvegicus (Rat).